The primary structure comprises 145 residues: Cell division protein SepF (145 aa).

Over residues 23–41 (PQEVSKTKDENAKPKHETP) the composition is skewed to basic and acidic residues. A disordered region spans residues 23 to 42 (PQEVSKTKDENAKPKHETPK).

The protein belongs to the SepF family. As to quaternary structure, homodimer. Interacts with FtsZ.

The protein localises to the cytoplasm. Functionally, cell division protein that is part of the divisome complex and is recruited early to the Z-ring. Probably stimulates Z-ring formation, perhaps through the cross-linking of FtsZ protofilaments. Its function overlaps with FtsA. This chain is Cell division protein SepF, found in Caldicellulosiruptor bescii (strain ATCC BAA-1888 / DSM 6725 / KCTC 15123 / Z-1320) (Anaerocellum thermophilum).